Here is a 527-residue protein sequence, read N- to C-terminus: MNVSVTKRRKKKKKKKSEKEKDKYLDEDERRRRKEEKKRKREKEQCDSEGETEVFESIRKDIEATDRPVRTCRTHPENESTPLQQLLEYFLRQLQRKDPNGFFAFPVTDQIAPGYFMIIKNPMDFSTMKEKISQDEYKSVTEFKADFKLMCDNAMTYNRPETVYYKLAKKLLHTGFKMMSKAALLGNEVTTTEEPIPEIIMPTAAEVVKKSKKPSKDMFRVMEEDQSSIFEPEGNACSLTDSTAEEHVLALVEHAADEARDKLNQYFPNCRIGYLKKNTDGTLFYTVVNGDPDNEEDTHLVDLSSLSSKLLPSFTTLGFKEDRRHKVTFLNSTGTALSLQNNTLFTNLKPDQIELMYAGYGDDTGIQCALSLQEFVKDSGSFAKRMVNDLLDQITGGDHSRTIYQIKQMTGSEREGCSNSVLDFMTLKSYSDVSLDMSMLSSLDKVKKELEHEDSHLNLDDASKLLPDFHDVHNDRGGSRPSSSSSMSNNSERDHHLGSPSRISVGEQQDIHDPYEFLQSPETDNQN.

A compositionally biased stretch (basic residues) spans M1 to K16. Residues M1–V54 are disordered. A compositionally biased stretch (basic and acidic residues) spans S17–R30. Residues R31–R41 are compositionally biased toward basic residues. In terms of domain architecture, Bromo spans N78–A182. The interval T156–N158 is histone H4K5ac H4K8ac and histone H4K5bu H4K8bu binding. Basic and acidic residues predominate over residues D468–G478. Residues D468–N527 are disordered. The span at S479–N490 shows a compositional bias: low complexity.

As to quaternary structure, binds acetylated histones H3 and H4. Binds butyrylated histone H4.

The protein localises to the nucleus. Functionally, plays a role in chromatin remodeling and regulation of transcription. Acts as a chromatin reader that recognizes and binds acylated histones: binds histones that are acetylated and/or butyrylated. The polypeptide is Bromodomain-containing protein 9 (brd9) (Xenopus laevis (African clawed frog)).